Consider the following 410-residue polypeptide: Argininosuccinate synthase (410 aa).

A8–S16 is a binding site for ATP. Position 86 (Y86) interacts with L-citrulline. G116 is a binding site for ATP. L-aspartate contacts are provided by T118, N122, and D123. N122 contacts L-citrulline. 4 residues coordinate L-citrulline: R126, S174, E259, and Y271.

This sequence belongs to the argininosuccinate synthase family. Type 1 subfamily. In terms of assembly, homotetramer.

Its subcellular location is the cytoplasm. The catalysed reaction is L-citrulline + L-aspartate + ATP = 2-(N(omega)-L-arginino)succinate + AMP + diphosphate + H(+). It participates in amino-acid biosynthesis; L-arginine biosynthesis; L-arginine from L-ornithine and carbamoyl phosphate: step 2/3. The polypeptide is Argininosuccinate synthase (Leuconostoc citreum (strain KM20)).